Reading from the N-terminus, the 276-residue chain is Carbonic anhydrase Nec1 (276 aa).

Residues 1–27 form the signal peptide; sequence MKMINSIFTHGSLIILLLLFHSISIKA. The Alpha-carbonic anhydrase domain maps to 34-270; the sequence is REFDYLEGSE…LNHREVQLHC (237 aa). A disulfide bond links C59 and C220. H98 (proton acceptor) is an active-site residue. Zn(2+)-binding residues include H124 and H126. N-linked (GlcNAc...) asparagine glycosylation is present at N134. A Zn(2+)-binding site is contributed by H143. A substrate binding region spans residues 216–217; it reads TT.

Belongs to the alpha-class carbonic anhydrase family. In terms of assembly, homodimer. It depends on Zn(2+) as a cofactor. As to expression, confined to nectaries.

The catalysed reaction is hydrogencarbonate + H(+) = CO2 + H2O. It functions in the pathway one-carbon metabolism. Functionally, involved in the production of blood-red nectar containing the alkaloid nesocodin and that serves as a visual attractant for pollinator visitation, including vertebrates such as Phelsuma geckos. The nectar is initially acidic and pale yellow, but slowly becomes alkaline before turning into red within 24 hours. Together with NEC2 and NEC3, facilitates the condensation of sinapaldehyde ((E)-3,5-dimethoxy-4-hydroxycinnamaldehyde) and proline to form nesocodin, a pigment with a stable imine bond. Mediates the alkalinization (pH increase) of the flower nectar by catalyzing the reversible hydration of carbon dioxide. The chain is Carbonic anhydrase Nec1 from Nesocodon mauritianus (Blue Mauritius bellflower).